Here is a 251-residue protein sequence, read N- to C-terminus: MRQALVMGNWKLNATKGSVEALINGLVDAAKDNATVEVAVCPPAVFIPQVEALTADTAITYGAQDCDVNTSGAFTGENSAVMLKEFGCKYTLVGHSERRVIHGESSEVVADKFAVTPENGLVPVLCIGETLEQFEAGETKAVVEAQLQAVVTKSGITSLNNAVIGYEPVWAIGTGKTATPEIAQEIPAHIRSWLAEQDAAVANKVQILYGGSVKPANSAELFGQADIDGGLVGGASLDAVEFSKVISGASA.

9–11 (NWK) is a substrate binding site. Residue histidine 95 is the Electrophile of the active site. The Proton acceptor role is filled by glutamate 167. Substrate contacts are provided by residues glycine 173, serine 212, and 233 to 234 (GG).

Belongs to the triosephosphate isomerase family. In terms of assembly, homodimer.

It localises to the cytoplasm. The enzyme catalyses D-glyceraldehyde 3-phosphate = dihydroxyacetone phosphate. Its pathway is carbohydrate biosynthesis; gluconeogenesis. It participates in carbohydrate degradation; glycolysis; D-glyceraldehyde 3-phosphate from glycerone phosphate: step 1/1. In terms of biological role, involved in the gluconeogenesis. Catalyzes stereospecifically the conversion of dihydroxyacetone phosphate (DHAP) to D-glyceraldehyde-3-phosphate (G3P). In Vibrio sp. (strain ANT-300), this protein is Triosephosphate isomerase.